The following is a 104-amino-acid chain: Urease subunit beta (104 aa).

This sequence belongs to the urease beta subunit family. As to quaternary structure, heterotrimer of UreA (gamma), UreB (beta) and UreC (alpha) subunits. Three heterotrimers associate to form the active enzyme.

The protein resides in the cytoplasm. The enzyme catalyses urea + 2 H2O + H(+) = hydrogencarbonate + 2 NH4(+). Its pathway is nitrogen metabolism; urea degradation; CO(2) and NH(3) from urea (urease route): step 1/1. This Methylocella silvestris (strain DSM 15510 / CIP 108128 / LMG 27833 / NCIMB 13906 / BL2) protein is Urease subunit beta.